Reading from the N-terminus, the 235-residue chain is Isopentenyl-diphosphate Delta-isomerase I (235 aa).

Lys-38 contacts substrate. Mg(2+) is bound by residues His-42 and His-54. In terms of domain architecture, Nudix hydrolase spans 52 to 204 (LLHRAFSVFL…GLKLSPWFRL (153 aa)). Substrate contacts are provided by Arg-73 and Lys-77. Residue Cys-89 is part of the active site. A substrate-binding site is contributed by Ser-90. Glu-149 and Glu-151 together coordinate Mg(2+). Glu-151 is an active-site residue.

Belongs to the IPP isomerase type 1 family. Mg(2+) is required as a cofactor.

It catalyses the reaction isopentenyl diphosphate = dimethylallyl diphosphate. Its pathway is isoprenoid biosynthesis; dimethylallyl diphosphate biosynthesis; dimethylallyl diphosphate from isopentenyl diphosphate: step 1/1. It participates in porphyrin-containing compound metabolism; chlorophyll biosynthesis. Catalyzes the 1,3-allylic rearrangement of the homoallylic substrate isopentenyl (IPP) to its highly electrophilic allylic isomer, dimethylallyl diphosphate (DMAPP). The protein is Isopentenyl-diphosphate Delta-isomerase I (IPI1) of Camptotheca acuminata (Happy tree).